We begin with the raw amino-acid sequence, 526 residues long: Germ cell-less protein-like 2 (526 aa).

A disordered region spans residues 1–85; sequence MGSSSSRVLG…DKQQPLLNTP (85 aa). A Nuclear localization signal motif is present at residues 49–55; the sequence is SHKRKRS. Residues 62-77 show a composition bias toward basic and acidic residues; the sequence is CDPDSHREEHEEEGDK. Positions 85-91 match the Nuclear localization signal motif; the sequence is PARKKLR. Residues 108–178 enclose the BTB domain; sequence SDIKICALGE…LYRDDVLIKP (71 aa).

Interacts with CUL3. Expressed predominantly in testis.

The protein localises to the nucleus matrix. Its pathway is protein modification; protein ubiquitination. Its function is as follows. Possible function in spermatogenesis. Probable substrate-specific adapter of an E3 ubiquitin-protein ligase complex which mediates the ubiquitination and subsequent proteasomal degradation of target proteins. In Homo sapiens (Human), this protein is Germ cell-less protein-like 2.